We begin with the raw amino-acid sequence, 106 residues long: uncharacterized protein (106 aa).

Positions 1–46 (MPQGGTPCRRARRAVRPERPTSPEGVFCVGGGAPGGPPDTTNTVSA) are disordered.

This is an uncharacterized protein from Gracula (BFDV).